The chain runs to 86 residues: uncharacterized protein (86 aa).

A helical membrane pass occupies residues 4 to 24; the sequence is LFFTLIAFVAIILLMSIGFII.

It localises to the membrane. This is an uncharacterized protein from Haemophilus influenzae (strain ATCC 51907 / DSM 11121 / KW20 / Rd).